The chain runs to 1366 residues: MAERADLVFHNKVIDGAAMKRLISRLIDHFGMAYTSHILDQVKTLGFQQATATSISLGIDDLLTIPSKGWLVQDAEQQSLILEKHHHYGNVHAVEKLRQSIEIWYATSEYLRQEMNPNFRMTDPSNPVHLMSFSGARGNASQVHQLVGMRGLMSDPQGQMIDLPIQSNLREGLSLTEYIISCYGARKGVVDTAVRTSDAGYLTRRLVEVVQHIIVRRTDCGTIRSISVSPRNGVPERIFIQTLIGRVLADDIYIGPRCIAARNQDIGIGLVNRFISFRAQPIHIRTPFTCRSTSWICQLCYGRSPTHGDLVELGEAVGIIAGQSIGEPGTQLTLRTFHTGGVFTGGTAEHVRAPFNGKIKFNEDLVHPTRTRHGHPAFLCSIDLYVTIESQDIIHNVNIPPKSLILVQNDQYVESEQVIAEIRAGAATLNFKEKVRKHIYSESEGEMHWSTDVYHAPEYTYGNVHLLPKTSHLWILAVGTCRYSIVSFSLHKDQDQINAHSLSLEERYISDLSVTKDLARHQLFSSDSSSKKRGGTFDYARPDGSISNGHWNLQYPFILHENSDFLAKRRRNKFIIPLQYDQERDKELIPHFGVSIEIPINGILRRNSILAYFDDPRYRRNSSGITKYGAVEVDSILKKEDLIEYRGTKELSPKYQTKVDRFFFIPEEVHVLPGSSLIMVRNNSIIGVDTPLTLNIRSRVGGLVRVERKKKSIELKIFSGDIHFPGETDKISRHSGILIPPGTGKMTSKESKKLKNWIYVQRITPTKKKYFVSVRPVVTYEIADGINLATFFPKDLLQEGDNIQLRVVNYILYGNGKPIRGISHTSIQLVRTCLVLNWHQEEKSSIEDSHASFVEIKTNDLTCNFIRIELGKSPLLYTGKRNSVVSSGLINHNGLDYLNSNPFYSKAKIPSLTKQKGTGGTLLNGNKECQSLKILLSSNYSRIGPFNGLKYNTVTKQSIKADPVTPIRNCLGLLGTVVLKIANFYSSCHLITYNKTLLKKYFLIENLSQTFQGIIFFLIDENRGIYNLDPCSKTVFNPFDLNWRFFHHDYCDETSTLITLGQIFCENVCLFKYGSQKKSGQVIIVHVDYLVIRSAKPYLATPGATVHGHYGETLHEGDTLVTFIYEKSRSGDITQGLPKVEQVLEVRSIDSISTNLEKRVKAWNERISRILGNPWGFLISTELTIAQSRISLVNKIQKVYRSQGVQIHNRHLEIIVRQVTSKVLVSEDGMSNVFLPGELIGLLRAERAGRALDEAISYRAILLGITRASLNTQSFISEASFQETARVLAKAALRGRIDWLKGLKENVVLGGIIPVGTGFKKLVHHSRQHKNIHLEIKNKNLFEGKMRDILFHHREFLSSCIPNNFQ.

Cys-220, Cys-290, Cys-297, and Cys-300 together coordinate Zn(2+).

This sequence belongs to the RNA polymerase beta' chain family. RpoC2 subfamily. In terms of assembly, in plastids the minimal PEP RNA polymerase catalytic core is composed of four subunits: alpha, beta, beta', and beta''. When a (nuclear-encoded) sigma factor is associated with the core the holoenzyme is formed, which can initiate transcription. Requires Zn(2+) as cofactor.

It is found in the plastid. The protein resides in the chloroplast. It carries out the reaction RNA(n) + a ribonucleoside 5'-triphosphate = RNA(n+1) + diphosphate. DNA-dependent RNA polymerase catalyzes the transcription of DNA into RNA using the four ribonucleoside triphosphates as substrates. This Lemna minor (Common duckweed) protein is DNA-directed RNA polymerase subunit beta''.